A 742-amino-acid chain; its full sequence is Photosystem I P700 chlorophyll a apoprotein A2 (742 aa).

A run of 8 helical transmembrane segments spans residues 46 to 69 (LFSTHFGHLAIIALWVAGNLFHIA), 135 to 158 (LFQASIFMSILACWTLFAGWLHLQ), 175 to 199 (LNHHLAVLFGFSSIAWTGHLVHVAI), 273 to 291 (IAHHHIAIGTVFIIAGHMY), 336 to 359 (LHFQLGLALAALGVATSLVAQHMG), 375 to 401 (SALYTHHQYIAMFLMVGAFAHGAIFFV), 423 to 445 (ALISHLSWVTMILGFHTLGIYVH), and 525 to 543 (FLVHHAIALGLHTTALILI). Cys-567 and Cys-576 together coordinate [4Fe-4S] cluster. 2 consecutive transmembrane segments (helical) span residues 583-604 (AMYLAMFWALNLIAWVTFYWHW) and 651-673 (LSVWAWMFLFGHLVWATGFMFLI). Positions 662, 670, and 678 each coordinate divinyl chlorophyll a. Trp-679 is a phylloquinone binding site. Residues 715–735 (LVGLAHFTIGNILTFGAFVIA) traverse the membrane as a helical segment.

It belongs to the PsaA/PsaB family. In terms of assembly, the PsaA/B heterodimer binds the P700 divinyl chlorophyll special pair and subsequent electron acceptors. PSI consists of a core antenna complex that captures photons, and an electron transfer chain that converts photonic excitation into a charge separation. The cyanobacterial PSI reaction center is composed of one copy each of PsaA,B,C,D,E,F,I,J,K,L,M and X, and forms trimeric complexes. Requires PSI electron transfer chain: 5 divinyl chlorophyll a, 1 divinyl chlorophyll a', 2 phylloquinones and 3 4Fe-4S clusters. PSI core antenna: 90 divinyl chlorophyll a, 22 carotenoids, 3 phospholipids and 1 galactolipid. P700 is a divinyl chlorophyll a/divinyl chlorophyll a' dimer, A0 is one or more divinyl chlorophyll a, A1 is one or both phylloquinones and FX is a shared 4Fe-4S iron-sulfur center. as cofactor.

The protein localises to the cellular thylakoid membrane. It catalyses the reaction reduced [plastocyanin] + hnu + oxidized [2Fe-2S]-[ferredoxin] = oxidized [plastocyanin] + reduced [2Fe-2S]-[ferredoxin]. In terms of biological role, psaA and PsaB bind P700, the primary electron donor of photosystem I (PSI), as well as the electron acceptors A0, A1 and FX. PSI is a plastocyanin/cytochrome c6-ferredoxin oxidoreductase, converting photonic excitation into a charge separation, which transfers an electron from the donor P700 chlorophyll pair to the spectroscopically characterized acceptors A0, A1, FX, FA and FB in turn. Oxidized P700 is reduced on the lumenal side of the thylakoid membrane by plastocyanin or cytochrome c6. The chain is Photosystem I P700 chlorophyll a apoprotein A2 from Prochlorococcus marinus (strain MIT 9515).